The following is a 341-amino-acid chain: S-adenosylmethionine:tRNA ribosyltransferase-isomerase (341 aa).

The protein belongs to the QueA family. In terms of assembly, monomer.

It is found in the cytoplasm. The enzyme catalyses 7-aminomethyl-7-carbaguanosine(34) in tRNA + S-adenosyl-L-methionine = epoxyqueuosine(34) in tRNA + adenine + L-methionine + 2 H(+). Its pathway is tRNA modification; tRNA-queuosine biosynthesis. In terms of biological role, transfers and isomerizes the ribose moiety from AdoMet to the 7-aminomethyl group of 7-deazaguanine (preQ1-tRNA) to give epoxyqueuosine (oQ-tRNA). The sequence is that of S-adenosylmethionine:tRNA ribosyltransferase-isomerase from Clostridium botulinum (strain Alaska E43 / Type E3).